The sequence spans 149 residues: Large ribosomal subunit protein bL20m (149 aa).

A mitochondrion-targeting transit peptide spans 1–9; sequence MVFLTAQLW.

The protein belongs to the bacterial ribosomal protein bL20 family. As to quaternary structure, component of the mitochondrial large ribosomal subunit (mt-LSU). Mature mammalian 55S mitochondrial ribosomes consist of a small (28S) and a large (39S) subunit. The 28S small subunit contains a 12S ribosomal RNA (12S mt-rRNA) and 30 different proteins. The 39S large subunit contains a 16S rRNA (16S mt-rRNA), a copy of mitochondrial valine transfer RNA (mt-tRNA(Val)), which plays an integral structural role, and 52 different proteins. Interacts with OXA1L.

The protein localises to the mitochondrion. The polypeptide is Large ribosomal subunit protein bL20m (MRPL20) (Homo sapiens (Human)).